A 159-amino-acid chain; its full sequence is Ribosomal RNA large subunit methyltransferase H (159 aa).

S-adenosyl-L-methionine contacts are provided by residues leucine 76, glycine 108, and 127-132; that span reads FSKMTF.

Belongs to the RNA methyltransferase RlmH family. As to quaternary structure, homodimer.

The protein resides in the cytoplasm. The enzyme catalyses pseudouridine(1915) in 23S rRNA + S-adenosyl-L-methionine = N(3)-methylpseudouridine(1915) in 23S rRNA + S-adenosyl-L-homocysteine + H(+). Functionally, specifically methylates the pseudouridine at position 1915 (m3Psi1915) in 23S rRNA. The chain is Ribosomal RNA large subunit methyltransferase H from Clostridium botulinum (strain Kyoto / Type A2).